Consider the following 293-residue polypeptide: Acetyl-coenzyme A carboxylase carboxyl transferase subunit beta (293 aa).

Positions 29–293 constitute a CoA carboxyltransferase N-terminal domain; that stretch reads LWVKCSECSQ…GVNELVEANI (265 aa). 4 residues coordinate Zn(2+): Cys33, Cys36, Cys52, and Cys55. The C4-type zinc finger occupies 33-55; that stretch reads CSECSQVAYRKDLISNFNVCSNC.

This sequence belongs to the AccD/PCCB family. As to quaternary structure, acetyl-CoA carboxylase is a heterohexamer composed of biotin carboxyl carrier protein (AccB), biotin carboxylase (AccC) and two subunits each of ACCase subunit alpha (AccA) and ACCase subunit beta (AccD). Zn(2+) serves as cofactor.

The protein localises to the cytoplasm. It carries out the reaction N(6)-carboxybiotinyl-L-lysyl-[protein] + acetyl-CoA = N(6)-biotinyl-L-lysyl-[protein] + malonyl-CoA. It participates in lipid metabolism; malonyl-CoA biosynthesis; malonyl-CoA from acetyl-CoA: step 1/1. In terms of biological role, component of the acetyl coenzyme A carboxylase (ACC) complex. Biotin carboxylase (BC) catalyzes the carboxylation of biotin on its carrier protein (BCCP) and then the CO(2) group is transferred by the transcarboxylase to acetyl-CoA to form malonyl-CoA. In Prochlorococcus marinus (strain MIT 9215), this protein is Acetyl-coenzyme A carboxylase carboxyl transferase subunit beta.